Consider the following 578-residue polypeptide: Dapdiamide synthesis protein DdaD (578 aa).

The Carrier domain occupies 498–573 (ESISATEHQI…KMAAWLDASS (76 aa)). Ser-533 is modified (O-(pantetheine 4'-phosphoryl)serine).

The protein belongs to the ATP-dependent AMP-binding enzyme family. Pantetheine 4'-phosphate is required as a cofactor.

Its pathway is antibiotic biosynthesis. Its function is as follows. Involved in dapdiamide antibiotics biosynthesis. Activates and sequesters N-beta-fumaramoyl-DAP as a covalently tethered thioester for subsequent oxidative modification of the fumaramoyl group. The polypeptide is Dapdiamide synthesis protein DdaD (Enterobacter agglomerans (Erwinia herbicola)).